A 518-amino-acid polypeptide reads, in one-letter code: Integrator complex subunit 14 (518 aa).

Positions 2 to 204 (PTVVVMDVSL…KNVQSMFGKL (203 aa)) constitute a VWFA domain. The Mg(2+) site is built by serine 10, serine 12, and threonine 86. Lysine 418 is subject to N6-acetyllysine.

It belongs to the Integrator subunit 14 family. Component of the Integrator complex, composed of core subunits INTS1, INTS2, INTS3, INTS4, INTS5, INTS6, INTS7, INTS8, INTS9/RC74, INTS10, INTS11/CPSF3L, INTS12, INTS13, INTS14 and INTS15. The core complex associates with protein phosphatase 2A subunits PPP2CA and PPP2R1A, to form the Integrator-PP2A (INTAC) complex. INTS14 is part of the tail subcomplex, composed of INTS10, INTS13, INTS14 and INTS15.

Its subcellular location is the nucleus. Functionally, component of the integrator complex, a multiprotein complex that terminates RNA polymerase II (Pol II) transcription in the promoter-proximal region of genes. The integrator complex provides a quality checkpoint during transcription elongation by driving premature transcription termination of transcripts that are unfavorably configured for transcriptional elongation: the complex terminates transcription by (1) catalyzing dephosphorylation of the C-terminal domain (CTD) of Pol II subunit POLR2A/RPB1 and SUPT5H/SPT5, (2) degrading the exiting nascent RNA transcript via endonuclease activity and (3) promoting the release of Pol II from bound DNA. The integrator complex is also involved in terminating the synthesis of non-coding Pol II transcripts, such as enhancer RNAs (eRNAs), small nuclear RNAs (snRNAs), telomerase RNAs and long non-coding RNAs (lncRNAs). Within the integrator complex, INTS14 is part of the integrator tail module that acts as a platform for the recruitment of transcription factors at promoters. This chain is Integrator complex subunit 14, found in Bos taurus (Bovine).